The primary structure comprises 184 residues: Ribosome-recycling factor (184 aa).

The protein belongs to the RRF family.

The protein localises to the cytoplasm. In terms of biological role, responsible for the release of ribosomes from messenger RNA at the termination of protein biosynthesis. May increase the efficiency of translation by recycling ribosomes from one round of translation to another. This Psychrobacter arcticus (strain DSM 17307 / VKM B-2377 / 273-4) protein is Ribosome-recycling factor.